Reading from the N-terminus, the 355-residue chain is Uroporphyrinogen decarboxylase (355 aa).

Substrate contacts are provided by residues 36–40 (RQAGR), aspartate 85, tyrosine 160, serine 215, and histidine 334.

Belongs to the uroporphyrinogen decarboxylase family. As to quaternary structure, homodimer.

It localises to the cytoplasm. The enzyme catalyses uroporphyrinogen III + 4 H(+) = coproporphyrinogen III + 4 CO2. Its pathway is porphyrin-containing compound metabolism; protoporphyrin-IX biosynthesis; coproporphyrinogen-III from 5-aminolevulinate: step 4/4. Catalyzes the decarboxylation of four acetate groups of uroporphyrinogen-III to yield coproporphyrinogen-III. The sequence is that of Uroporphyrinogen decarboxylase from Rhodococcus jostii (strain RHA1).